The chain runs to 145 residues: Anaerobic nitrite reductase NSHB5 (145 aa).

Residues 2–142 (GFSETQEELV…LAAAIKEEMK (141 aa)) form the Globin domain. The short motif at 35 to 39 (EIAPA) is the Homodimerization element. Heme b is bound by residues Ser-45, His-59, Lys-61, Arg-84, Thr-88, and His-89. The Homodimerization signature appears at 96 to 108 (DAHFEVVKTALLD).

The protein belongs to the plant globin family. In terms of assembly, homodimer. Requires heme b as cofactor. As to expression, expressed in embryonic (embryos, coleoptiles and seminal roots) and vegetative (leaves and roots) organs.

The protein localises to the cytoplasm. It localises to the nucleus. The enzyme catalyses Fe(III)-heme b-[protein] + nitric oxide + H2O = Fe(II)-heme b-[protein] + nitrite + 2 H(+). In terms of biological role, phytoglobin that reduces nitrite to nitric oxide under anoxic conditions (e.g. during flooding or in waterlogged soil). May not function as an oxygen storage or transport protein. Has an unusually high affinity for O(2) through an hexacoordinate heme iron because of a very low dissociation constant. This Oryza sativa subsp. indica (Rice) protein is Anaerobic nitrite reductase NSHB5.